The sequence spans 412 residues: G-protein coupled receptor homolog UL33 (412 aa).

Topologically, residues 1–29 are virion surface; sequence MDTIIHNSTRNNTPPHINDTCNMTGPLFA. N-linked (GlcNAc...) asparagine; by host glycans are attached at residues asparagine 7, asparagine 18, and asparagine 22. The helical transmembrane segment at 30-54 threads the bilayer; it reads IRTTEAVLNTFIIFVGGPLNAIVLI. Residues 55–70 are Intravirion-facing; sequence TQLLTNRVLGYSTPTI. The chain crosses the membrane as a helical span at residues 71-95; it reads YMTNLYSTNFLTLTVLPFIVLSNQW. At 96–102 the chain is on the virion surface side; sequence LLPAGVA. The chain crosses the membrane as a helical span at residues 103-129; that stretch reads SCKFLSVIYYSSCTVGFATVALIAADR. Cysteines 104 and 188 form a disulfide. Over 130–138 the chain is Intravirion; sequence YRVLHKRTY. A helical membrane pass occupies residues 139 to 160; sequence ARQSYRSTYMILLLTWLAGLIF. Residues 161–203 are Virion surface-facing; it reads SVPAAVYTTVVMHHDANDTNNTNGHATCVLYFVAEEVHTVLLS. 2 N-linked (GlcNAc...) asparagine; by host glycosylation sites follow: asparagine 177 and asparagine 180. The chain crosses the membrane as a helical span at residues 204-224; the sequence is WKVLLTMVWGAAPVIMMTWFY. The Intravirion portion of the chain corresponds to 225–240; the sequence is AFFYSTVQRTSQKQRS. Residues 241–267 form a helical membrane-spanning segment; that stretch reads RTLTFVSVLLISFVALQTPYVSLMIFN. The Virion surface segment spans residues 268 to 281; the sequence is SYATTAWPMQCEHL. A helical transmembrane segment spans residues 282–305; it reads TLRRTIGTLARVVPHLHCLINPIL. The Intravirion portion of the chain corresponds to 306–412; that stretch reads YALLGHDFLQ…SQSHHNLSGV (107 aa). A disordered region spans residues 377 to 412; it reads NFPSGTWKGGQKTASNDTSTKIPHRLSQSHHNLSGV. Polar residues predominate over residues 388-397; it reads KTASNDTSTK.

Belongs to the G-protein coupled receptor 1 family. Heterodimerizes with US28.

It is found in the virion. The protein resides in the host cell membrane. The protein localises to the host cytoplasm. In terms of biological role, G-protein-coupled receptor (vGPCR) that constitutively activates multiple oncogenic signaling pathways including STAT3, AP-1, phospholipase C, NF-kappa-B or cAMP-responsive element (CRE) pathways. Plays an important role in viral reactivation from latency through activation of host CREB1, facilitating its recruitment to the viral major immediate early (MIE) genes. In turn, expression of the MIE-driven genes such as UL123 are de-repressed. Also facilitates virus dissemination via the extracellular and cell-to-cell route. The sequence is that of G-protein coupled receptor homolog UL33 (UL33) from Human cytomegalovirus (strain AD169) (HHV-5).